A 428-amino-acid polypeptide reads, in one-letter code: MSAIVDIIGREILDSRGNPTVECDVLLESGAMGRASVPSGASTGSREAIELRDGDKGRYLGKGVLRAVENLNTEISEALMGLDAQEQTFVDRTLIELDGTDSKERLGANAMLAASMAVARAAADESGLSLYRYFGGSGPMSMPVPMMNVINGGAHANNTLDLQELMILPVGAASFREALRWGAEVFHMLKKLIHDQGMSTAVGDEGGFAPNVASHEAAIQLILKAITEAGYEPGTQIALGLDCASSEFYRDGKYTLAGEGGVSLSSQEFANLLATWCDKYPIISIEDGMAENDWDGWKLLTDQLGKKVQLVGDDLFVTNTRILREGIQKGVANSILIKINQIGTLTETFAAIEMAKRAGYTAVVSHRSGETEDSTIADIAVATNAMQIKTGSLSRSDRMAKYNQLLRIEEELAEVASYPGLEAFYNLR.

Glutamine 163 contributes to the (2R)-2-phosphoglycerate binding site. Glutamate 205 serves as the catalytic Proton donor. Mg(2+)-binding residues include aspartate 242, glutamate 286, and aspartate 313. (2R)-2-phosphoglycerate-binding residues include lysine 338, arginine 367, serine 368, and lysine 389. The active-site Proton acceptor is the lysine 338.

Belongs to the enolase family. The cofactor is Mg(2+).

The protein resides in the cytoplasm. It localises to the secreted. Its subcellular location is the cell surface. The catalysed reaction is (2R)-2-phosphoglycerate = phosphoenolpyruvate + H2O. Its pathway is carbohydrate degradation; glycolysis; pyruvate from D-glyceraldehyde 3-phosphate: step 4/5. Its function is as follows. Catalyzes the reversible conversion of 2-phosphoglycerate (2-PG) into phosphoenolpyruvate (PEP). It is essential for the degradation of carbohydrates via glycolysis. This Bordetella bronchiseptica (strain ATCC BAA-588 / NCTC 13252 / RB50) (Alcaligenes bronchisepticus) protein is Enolase.